A 181-amino-acid chain; its full sequence is Phospholipase A2 inhibitor gamma subunit B (181 aa).

Intrachain disulfides connect Cys-3–Cys-27, Cys-6–Cys-13, Cys-20–Cys-48, Cys-54–Cys-75, Cys-76–Cys-81, Cys-101–Cys-126, Cys-119–Cys-146, and Cys-152–Cys-172.

Belongs to the CNF-like-inhibitor family. Heterotrimer of 2 subunits A and 1 subunit B. Expressed by the liver.

Its subcellular location is the secreted. Strongly inhibits its own venom PLA2 and all other PLA2s tested including Elapid, Crotalid and Viperid venom PLA2s, as well as honeybee PLA2s. The chain is Phospholipase A2 inhibitor gamma subunit B from Laticauda semifasciata (Black-banded sea krait).